The sequence spans 92 residues: UPF0250 protein XCC3453 (92 aa).

This sequence belongs to the UPF0250 family.

The sequence is that of UPF0250 protein XCC3453 from Xanthomonas campestris pv. campestris (strain ATCC 33913 / DSM 3586 / NCPPB 528 / LMG 568 / P 25).